The primary structure comprises 477 residues: Glutamyl-tRNA(Gln) amidotransferase subunit A (477 aa).

Active-site charge relay system residues include Lys-71 and Ser-146. Ser-170 serves as the catalytic Acyl-ester intermediate.

It belongs to the amidase family. GatA subfamily. As to quaternary structure, heterotrimer of A, B and C subunits.

It catalyses the reaction L-glutamyl-tRNA(Gln) + L-glutamine + ATP + H2O = L-glutaminyl-tRNA(Gln) + L-glutamate + ADP + phosphate + H(+). Allows the formation of correctly charged Gln-tRNA(Gln) through the transamidation of misacylated Glu-tRNA(Gln) in organisms which lack glutaminyl-tRNA synthetase. The reaction takes place in the presence of glutamine and ATP through an activated gamma-phospho-Glu-tRNA(Gln). This Halothermothrix orenii (strain H 168 / OCM 544 / DSM 9562) protein is Glutamyl-tRNA(Gln) amidotransferase subunit A.